The following is a 105-amino-acid chain: Urease subunit beta (105 aa).

The protein belongs to the urease beta subunit family. In terms of assembly, heterotrimer of UreA (gamma), UreB (beta) and UreC (alpha) subunits. Three heterotrimers associate to form the active enzyme.

The protein localises to the cytoplasm. It carries out the reaction urea + 2 H2O + H(+) = hydrogencarbonate + 2 NH4(+). It functions in the pathway nitrogen metabolism; urea degradation; CO(2) and NH(3) from urea (urease route): step 1/1. This is Urease subunit beta from Marinobacter nauticus (strain ATCC 700491 / DSM 11845 / VT8) (Marinobacter aquaeolei).